Reading from the N-terminus, the 295-residue chain is 2-dehydropantoate 2-reductase (295 aa).

Residues 9–14 (GPGAVG), N100, and A126 contribute to the NADP(+) site. Residue N100 coordinates substrate. Catalysis depends on K177, which acts as the Proton donor. Residues N181 and S246 each contribute to the substrate site. E258 is an NADP(+) binding site.

The protein belongs to the ketopantoate reductase family.

Its subcellular location is the cytoplasm. The catalysed reaction is (R)-pantoate + NADP(+) = 2-dehydropantoate + NADPH + H(+). Its pathway is cofactor biosynthesis; (R)-pantothenate biosynthesis; (R)-pantoate from 3-methyl-2-oxobutanoate: step 2/2. In terms of biological role, catalyzes the NADPH-dependent reduction of ketopantoate into pantoic acid. In Mycobacterium tuberculosis (strain CDC 1551 / Oshkosh), this protein is 2-dehydropantoate 2-reductase.